Consider the following 401-residue polypeptide: 1-deoxy-D-xylulose 5-phosphate reductoisomerase (401 aa).

NADPH-binding residues include Thr11, Gly12, Ser13, Ile14, Arg38, Asn39, and Asn125. Lys126 is a 1-deoxy-D-xylulose 5-phosphate binding site. An NADPH-binding site is contributed by Glu127. Asp151 is a Mn(2+) binding site. Residues Ser152, Glu153, Ser179, and His202 each contribute to the 1-deoxy-D-xylulose 5-phosphate site. A Mn(2+)-binding site is contributed by Glu153. Gly208 contacts NADPH. The 1-deoxy-D-xylulose 5-phosphate site is built by Ser215, Asn220, Lys221, and Glu224. Glu224 serves as a coordination point for Mn(2+).

The protein belongs to the DXR family. Requires Mg(2+) as cofactor. Mn(2+) is required as a cofactor.

The catalysed reaction is 2-C-methyl-D-erythritol 4-phosphate + NADP(+) = 1-deoxy-D-xylulose 5-phosphate + NADPH + H(+). It functions in the pathway isoprenoid biosynthesis; isopentenyl diphosphate biosynthesis via DXP pathway; isopentenyl diphosphate from 1-deoxy-D-xylulose 5-phosphate: step 1/6. Functionally, catalyzes the NADPH-dependent rearrangement and reduction of 1-deoxy-D-xylulose-5-phosphate (DXP) to 2-C-methyl-D-erythritol 4-phosphate (MEP). This chain is 1-deoxy-D-xylulose 5-phosphate reductoisomerase, found in Paraburkholderia phymatum (strain DSM 17167 / CIP 108236 / LMG 21445 / STM815) (Burkholderia phymatum).